A 193-amino-acid chain; its full sequence is MSRSANITRETKETKIEVLLDIDRKGEVKVSTPIPFFNHMLITLLTYMNSTAIVSATDKLPYDDHHIVEDVAITLGLAIKTALGDKRGIKRFSHQIIPMDDALVLVSLDISNRGMAFVNLNLKRSEIGGLATENVPHFFQSFAYNSGITLHISQLSGYNTHHIIEASFKALGLALYEATRIVDNEIRSTKGII.

The protein belongs to the imidazoleglycerol-phosphate dehydratase family.

It is found in the cytoplasm. It carries out the reaction D-erythro-1-(imidazol-4-yl)glycerol 3-phosphate = 3-(imidazol-4-yl)-2-oxopropyl phosphate + H2O. It functions in the pathway amino-acid biosynthesis; L-histidine biosynthesis; L-histidine from 5-phospho-alpha-D-ribose 1-diphosphate: step 6/9. The sequence is that of Imidazoleglycerol-phosphate dehydratase (hisB) from Saccharolobus solfataricus (strain ATCC 35092 / DSM 1617 / JCM 11322 / P2) (Sulfolobus solfataricus).